A 187-amino-acid polypeptide reads, in one-letter code: UPF0301 protein plu1183 (187 aa).

Belongs to the UPF0301 (AlgH) family.

This chain is UPF0301 protein plu1183, found in Photorhabdus laumondii subsp. laumondii (strain DSM 15139 / CIP 105565 / TT01) (Photorhabdus luminescens subsp. laumondii).